We begin with the raw amino-acid sequence, 469 residues long: 3-isopropylmalate dehydratase large subunit (469 aa).

Residues C350, C410, and C413 each coordinate [4Fe-4S] cluster.

The protein belongs to the aconitase/IPM isomerase family. LeuC type 1 subfamily. Heterodimer of LeuC and LeuD. [4Fe-4S] cluster is required as a cofactor.

It carries out the reaction (2R,3S)-3-isopropylmalate = (2S)-2-isopropylmalate. Its pathway is amino-acid biosynthesis; L-leucine biosynthesis; L-leucine from 3-methyl-2-oxobutanoate: step 2/4. In terms of biological role, catalyzes the isomerization between 2-isopropylmalate and 3-isopropylmalate, via the formation of 2-isopropylmaleate. This is 3-isopropylmalate dehydratase large subunit from Chelativorans sp. (strain BNC1).